A 379-amino-acid polypeptide reads, in one-letter code: Carbamoyl phosphate synthase small chain (379 aa).

The tract at residues 1 to 189 (MSKSALLVLE…GLPEAKADSE (189 aa)) is CPSase. The L-glutamine site is built by Ser-47, Gly-241, and Gly-243. One can recognise a Glutamine amidotransferase type-1 domain in the interval 193-379 (HVVAYDFGAK…FIELIKQFRA (187 aa)). Catalysis depends on Cys-269, which acts as the Nucleophile. L-glutamine-binding residues include Leu-270, Gln-273, Asn-311, Gly-313, and Phe-314. Active-site residues include His-353 and Glu-355.

It belongs to the CarA family. As to quaternary structure, composed of two chains; the small (or glutamine) chain promotes the hydrolysis of glutamine to ammonia, which is used by the large (or ammonia) chain to synthesize carbamoyl phosphate. Tetramer of heterodimers (alpha,beta)4.

The enzyme catalyses hydrogencarbonate + L-glutamine + 2 ATP + H2O = carbamoyl phosphate + L-glutamate + 2 ADP + phosphate + 2 H(+). The catalysed reaction is L-glutamine + H2O = L-glutamate + NH4(+). It participates in amino-acid biosynthesis; L-arginine biosynthesis; carbamoyl phosphate from bicarbonate: step 1/1. Its pathway is pyrimidine metabolism; UMP biosynthesis via de novo pathway; (S)-dihydroorotate from bicarbonate: step 1/3. Its function is as follows. Small subunit of the glutamine-dependent carbamoyl phosphate synthetase (CPSase). CPSase catalyzes the formation of carbamoyl phosphate from the ammonia moiety of glutamine, carbonate, and phosphate donated by ATP, constituting the first step of 2 biosynthetic pathways, one leading to arginine and/or urea and the other to pyrimidine nucleotides. The small subunit (glutamine amidotransferase) binds and cleaves glutamine to supply the large subunit with the substrate ammonia. The chain is Carbamoyl phosphate synthase small chain from Vibrio cholerae serotype O1 (strain ATCC 39315 / El Tor Inaba N16961).